Reading from the N-terminus, the 157-residue chain is Small ribosomal subunit protein uS7 (157 aa).

It belongs to the universal ribosomal protein uS7 family. As to quaternary structure, part of the 30S ribosomal subunit. Contacts proteins S9 and S11.

One of the primary rRNA binding proteins, it binds directly to 16S rRNA where it nucleates assembly of the head domain of the 30S subunit. Is located at the subunit interface close to the decoding center, probably blocks exit of the E-site tRNA. The polypeptide is Small ribosomal subunit protein uS7 (Caulobacter sp. (strain K31)).